The following is a 232-amino-acid chain: GTP cyclohydrolase 1 (232 aa).

Residues 1–24 (MSDNLKSYQDNHIENEDEEIYERS) are disordered. Positions 121, 124, and 192 each coordinate Zn(2+).

It belongs to the GTP cyclohydrolase I family. Toroid-shaped homodecamer, composed of two pentamers of five dimers.

It catalyses the reaction GTP + H2O = 7,8-dihydroneopterin 3'-triphosphate + formate + H(+). It functions in the pathway cofactor biosynthesis; 7,8-dihydroneopterin triphosphate biosynthesis; 7,8-dihydroneopterin triphosphate from GTP: step 1/1. First enzyme in the biosynthesis of tetrahydrobiopterin (BH4). Catalyzes the conversion of GTP into dihydroneopterin triphosphate (7,8-dihydroneopterin 3'-triphosphate), which is subsequently catalyzed by 6-pyruvoyltetrahydropterin synthase (ptsA) and sepiapterin reductase (sprA). In Dictyostelium discoideum (Social amoeba), this protein is GTP cyclohydrolase 1 (gchA).